A 315-amino-acid chain; its full sequence is Malate dehydrogenase (315 aa).

NAD(+) contacts are provided by residues Gly7–Gly12 and Asp32. Substrate is bound by residues Arg81 and Arg87. Residues Asn94 and Val117–Asn119 each bind NAD(+). Asn119 and Arg150 together coordinate substrate. His174 (proton acceptor) is an active-site residue.

Belongs to the LDH/MDH superfamily. MDH type 3 family.

The catalysed reaction is (S)-malate + NAD(+) = oxaloacetate + NADH + H(+). Catalyzes the reversible oxidation of malate to oxaloacetate. This Neorickettsia sennetsu (strain ATCC VR-367 / Miyayama) (Ehrlichia sennetsu) protein is Malate dehydrogenase.